The chain runs to 316 residues: Transaldolase (316 aa).

The active-site Schiff-base intermediate with substrate is the Lys-131.

This sequence belongs to the transaldolase family. Type 1 subfamily. As to quaternary structure, homodimer.

The protein localises to the cytoplasm. It catalyses the reaction D-sedoheptulose 7-phosphate + D-glyceraldehyde 3-phosphate = D-erythrose 4-phosphate + beta-D-fructose 6-phosphate. The protein operates within carbohydrate degradation; pentose phosphate pathway; D-glyceraldehyde 3-phosphate and beta-D-fructose 6-phosphate from D-ribose 5-phosphate and D-xylulose 5-phosphate (non-oxidative stage): step 2/3. Transaldolase is important for the balance of metabolites in the pentose-phosphate pathway. This Glaesserella parasuis serovar 5 (strain SH0165) (Haemophilus parasuis) protein is Transaldolase.